A 369-amino-acid chain; its full sequence is Protein VP6 (369 aa).

Disordered regions lie at residues 17-169 and 184-208; these read KREL…LQGR and LDRIGGCSGNSKTEGEEAKAGGGDR. Positions 29–68 are enriched in basic and acidic residues; it reads LREKGSTEAKSKLKEDGEKKNKSEKEENKIHDDRRVESQK. Positions 92–111 are enriched in gly residues; sequence TGGGDGSAGARTGIGGGGVG. 2 stretches are compositionally biased toward basic and acidic residues: residues 137 to 148 and 196 to 208; these read TGADRVANDDAT and TEGEEAKAGGGDR.

Belongs to the orbivirus VP6 family.

Its subcellular location is the virion. This is Protein VP6 (Segment-9) from African horse sickness virus (AHSV).